Here is a 63-residue protein sequence, read N- to C-terminus: Conotoxin Lt11.1 (63 aa).

Residues 1 to 23 (MMFRLTSVLLVIVLLNLVVLTNA) form the signal peptide. 4 disulfide bridges follow: Cys24/Cys34, Cys28/Cys39, Cys33/Cys42, and Cys38/Cys47. Positions 53 to 63 (ALLQRLLGHQR) are excised as a propeptide.

This sequence belongs to the conotoxin I2 superfamily. In terms of tissue distribution, expressed by the venom duct.

It is found in the secreted. The chain is Conotoxin Lt11.1 from Conus litteratus (Lettered cone).